The primary structure comprises 253 residues: ATP synthase subunit a (253 aa).

6 consecutive transmembrane segments (helical) span residues 34 to 54, 89 to 109, 118 to 138, 156 to 178, 203 to 223, and 226 to 246; these read SSLF…LSFY, YFPF…IGMI, HIVF…LIGI, LAIV…FTLS, LSAG…LLAL, and LELA…CIYL.

The protein belongs to the ATPase A chain family. In terms of assembly, F-type ATPases have 2 components, CF(1) - the catalytic core - and CF(0) - the membrane proton channel. CF(1) has five subunits: alpha(3), beta(3), gamma(1), delta(1), epsilon(1). CF(0) has three main subunits: a, b and c.

It is found in the mitochondrion inner membrane. In terms of biological role, mitochondrial membrane ATP synthase (F(1)F(0) ATP synthase or Complex V) produces ATP from ADP in the presence of a proton gradient across the membrane which is generated by electron transport complexes of the respiratory chain. F-type ATPases consist of two structural domains, F(1) - containing the extramembraneous catalytic core and F(0) - containing the membrane proton channel, linked together by a central stalk and a peripheral stalk. During catalysis, ATP synthesis in the catalytic domain of F(1) is coupled via a rotary mechanism of the central stalk subunits to proton translocation. Key component of the proton channel; it may play a direct role in the translocation of protons across the membrane. This Chondrus crispus (Carrageen Irish moss) protein is ATP synthase subunit a (ATP6).